A 406-amino-acid polypeptide reads, in one-letter code: NAC transcription factor NAM-1 (406 aa).

Over residues 1 to 11 (MGSPDSSSGSA) the composition is skewed to polar residues. The tract at residues 1 to 40 (MGSPDSSSGSAQKPPRHQHQHQPPPPRRQGSAPELPPGFR) is disordered. The NAC domain occupies 35–204 (LPPGFRFHPT…DWVLCRIYKK (170 aa)). A DNA-binding region spans residues 137–210 (VGVKKALVFY…IYKKTSKAAA (74 aa)).

The protein resides in the nucleus. In terms of biological role, transcription factor of the NAC family associated with the grain protein content (GPC). Accelerates senescence and increases nutrient remobilization from leaves to developing grains. Sequences of 11 European varieties of H.vulgare tested belongs to the same haplotype while the sequence found in H.spontaneum, an ancestor of the cultivated H.vulgare which has a higher GPC, belongs to an other haplotype. This Hordeum vulgare subsp. vulgare (Domesticated barley) protein is NAC transcription factor NAM-1 (NAM-1).